Here is a 298-residue protein sequence, read N- to C-terminus: Porphobilinogen deaminase (298 aa).

Cys239 bears the S-(dipyrrolylmethanemethyl)cysteine mark.

Belongs to the HMBS family. Monomer. Dipyrromethane is required as a cofactor.

It carries out the reaction 4 porphobilinogen + H2O = hydroxymethylbilane + 4 NH4(+). It participates in porphyrin-containing compound metabolism; protoporphyrin-IX biosynthesis; coproporphyrinogen-III from 5-aminolevulinate: step 2/4. Its function is as follows. Tetrapolymerization of the monopyrrole PBG into the hydroxymethylbilane pre-uroporphyrinogen in several discrete steps. The chain is Porphobilinogen deaminase from Orientia tsutsugamushi (strain Boryong) (Rickettsia tsutsugamushi).